A 320-amino-acid polypeptide reads, in one-letter code: Cytochrome f (320 aa).

The N-terminal stretch at 1–35 (MQTRNTFSWIREEITRSISVSLMIYIITWASISSA) is a signal peptide. Residues Tyr-36, Cys-56, Cys-59, and His-60 each contribute to the heme site. Residues 286-306 (VQGLLFFLGSVVLAQIFLVLK) traverse the membrane as a helical segment.

It belongs to the cytochrome f family. As to quaternary structure, the 4 large subunits of the cytochrome b6-f complex are cytochrome b6, subunit IV (17 kDa polypeptide, petD), cytochrome f and the Rieske protein, while the 4 small subunits are PetG, PetL, PetM and PetN. The complex functions as a dimer. It depends on heme as a cofactor.

Its subcellular location is the plastid. The protein localises to the chloroplast thylakoid membrane. Its function is as follows. Component of the cytochrome b6-f complex, which mediates electron transfer between photosystem II (PSII) and photosystem I (PSI), cyclic electron flow around PSI, and state transitions. This Lepidium virginicum (Virginia pepperweed) protein is Cytochrome f.